Reading from the N-terminus, the 189-residue chain is Large ribosomal subunit protein eL14 (189 aa).

Belongs to the eukaryotic ribosomal protein eL14 family.

In terms of biological role, component of the large ribosomal subunit. The ribosome is a large ribonucleoprotein complex responsible for the synthesis of proteins in the cell. The protein is Large ribosomal subunit protein eL14 of Trypanosoma brucei brucei.